A 408-amino-acid polypeptide reads, in one-letter code: tRNA(Met) cytidine acetate ligase (408 aa).

ATP contacts are provided by residues 7 to 20 (IVEY…HKYH), Gly-102, Asn-170, and 195 to 196 (RI).

It belongs to the TmcAL family.

It localises to the cytoplasm. It carries out the reaction cytidine(34) in elongator tRNA(Met) + acetate + ATP = N(4)-acetylcytidine(34) in elongator tRNA(Met) + AMP + diphosphate. Its function is as follows. Catalyzes the formation of N(4)-acetylcytidine (ac(4)C) at the wobble position of elongator tRNA(Met), using acetate and ATP as substrates. First activates an acetate ion to form acetyladenylate (Ac-AMP) and then transfers the acetyl group to tRNA to form ac(4)C34. This Clostridium kluyveri (strain NBRC 12016) protein is tRNA(Met) cytidine acetate ligase.